The sequence spans 2280 residues: MVSKPFKPIVLNATFEWQVFKRCYLRVAPREAFCENLSELHHYFARRVNAWLKHATRTLPDEYTFVEEGLLDMFGTKAPDSVQEGTLFRELFGVDQTEQFPLSLADLARLQGELVDATRTPGHALRQKYTMTTIQDLINKITKVVPVQATLNEMHARRQFERERADLFHELPLVDEDAVAQPKTYFYTMWRQVVKKGKAYFCPLVKTSAWRTKISAITEPIKDFLIAFWQAVQQEMGVNPQYLQLAWLQKLKPTTLTIILQQHKHTVSGWLATMTALVEVYSNLFDDLRKSSVTIVSSIGAFFDICKDFVSQVVELVKTTFTAQGPTDLGWAAVLAGAAMILLKMSGCPGVIGMWTKVLKICGGITTITAAARGVRWLKDLYEEAEGRRLPKMYMARGAALIELAASREVTGVDELKGLLDCFTILIEEGTELIHKFGTSPLAGLVRTYVSELETQANNIRSTIKLDTPRRVPVVIILTGAPGIGKTRLAQYIGQRFGKTSNFSVAVDHHDGYTGNTVCIWDEFDVDSKGAFVETMIGIANTAPFPLNCDRVENKGRVFTSDYVICTSNYPTSVIPDNPRAAAFYRRVLTVDVSAPDLEEWKKRNPGKRPTPDLYQDDFSHLKLMLRPYLGYNPDGDTLEGPRVAPTQISIAGLITLMERRFKEQAGPLQNLWLQVPKTLVEQSTNMVKAFMYANRAVCDVIPNPATRDITETALSKVFVCGTAPPPEFVGKHIVITGIEVGDASIANSLLSMFTTTTRLSAAAQREYMYRVWSPLIHIQDRSMNTQNLPYINRVIPVTSHWDFLRGLRHHLGFTSIPGMWKAFQGWRTSQGIVDFVAHHMADVTFPSNPECTIFRTPDADVVFYTFGSYVCFATPARVPYVGTPPTTIHSNTPRCMTWGETLALLCEVVAEFVLHFGPVILSAANIAYLMTRGSRTEEAKGKTKHGRGMRHGHRAGVSLSDDEYDEWRDLMRDWRRDMSVNDFLMLRERSALGMDDEDVARYRAWLEIRAMRMAGGAYTHATIIGRGGVRDEIIRTSPRRAPTRPQQHYEEEGPTAIVEFTQGGDHIGYGVHIGNGNVITVTHVASTSDEVNGSAFKITRTVGETTWVQGPFSQLPHMQIGSGSPVYFTTRLHPVFTISEGTFETPNITVNGFHVRIMNGYPTKKGDCGLPYFNSNRQLVALHAGTDTQGETKVAQRVVKEVTTQDEFQWKGLPVVKSGLDVGGMPTGTRYHRSPAWPEEQPGETHAPAPFGSGDKRYTFSQTEMLVNGLKPYTEPTAGVPPQLLSRAVTHVRSYIETIIGTHRSPVLTYHQACELLERTTSCGPFVQGLKGDYWDEEQQQYTGVLANHLEQAWDKANKGIAPRNAYKLALKDELRPIEKNKAGKRRLLWGCDAATTLIATAAFKAVATRLQVVTPMTPVAVGINMDSVQMQVMNDSLKGGVLYCLDYSKWDSTQNPAVTAASLAILERFAEPHPIVSCAIEALSSPAEGYVNDIKFVTRGGLPSGMPFTSVVNSINHMIYVAAAILQAYESHNVPYTGNVFQVETIHTYGDDCMYSVCPATASIFHTVLANLTSYGLKPTAADKSDAIKPTNTPVFLKRTFTQTPHGIRALLDITSITRQFYWLKANRTSDPSSPPAFDRQARSAQLENALAYASQHGPVMFDTVRQIAIKTAQGEGLVLVNTNYDQALATYNAWFIGGTVPDPVGHTEGTHKIVFEMEGNGSNPEPKQSNNPMVVDPPGTTGPTTSHVVVANPEQPNGAAQRLELAVATGAIQSNVPEAIRNCFAVFRTFAWNDRMPTGTFLGSISLHPNINPYTSHLSGMWAGWGGSFEVRLSISGSGVFAGRIIASVIPPGVDPSSIRDPGVLPHAFVDARITEPVSFMIPDVRAVDYHRMDGAEPTCSLGFWVYQPLLNPFSTTAVSTCWVSVETKPGGDFDFCLLRPPGQQMENGVSPEGLLPRRLGYSRGNRVGGLVVGMILVAEHKQVNRHFNSNSVTFGWSTAPVNPMAAEIVTNQAHSTSRHAWLSIGAQNKGPLFPGIPNHFPDSCASTVVGAMDTSLGGRPSTGVCGPAISFQNNGDVYENDTPSVMFATYDPLTSGTGVALTNSINPASLALVRISNNDFDTSGFANDKNVVVQMSWEMYTGTNQIRGQVTPMSGTNYTFTSTGANTLVLWQERMLSYDGHQAILYSSQLERTAEYFQNDIVNIPENSMAVFNVETNSASFQIGIRPDGYMVTGGSIGVNVPLEPETRFQYVGILPLSAALSGPSGNMGRARRVFQ.

Residues 454–608 (ETQANNIRST…EEWKKRNPGK (155 aa)) enclose the SF3 helicase domain. Position 480–487 (480–487 (GAPGIGKT)) interacts with ATP. O-(5'-phospho-RNA)-tyrosine is present on tyrosine 965. The 149-residue stretch at 1054-1202 (GPTAIVEFTQ…TKVAQRVVKE (149 aa)) folds into the Peptidase C24 domain. Active-site for 3CLpro activity residues include histidine 1084, glutamate 1105, and cysteine 1169. The region spanning 1442-1567 (GVLYCLDYSK…SVCPATASIF (126 aa)) is the RdRp catalytic domain. The disordered stretch occupies residues 1722–1746 (GNGSNPEPKQSNNPMVVDPPGTTGP). The segment covering 1723-1735 (NGSNPEPKQSNNP) has biased composition (polar residues).

Homodimer. Homomultimer. In terms of processing, specific enzymatic cleavages in vivo yield mature proteins. Pro-Pol is first autocatalytically cleaved, then processes the whole polyprotein. Post-translationally, VPg is uridylylated by the polymerase and is covalently attached to the 5'-end of the polyadenylated genomic and subgenomic RNAs. This uridylylated form acts as a nucleotide-peptide primer for the polymerase.

Its subcellular location is the virion. The protein localises to the host cytoplasm. It catalyses the reaction a ribonucleoside 5'-triphosphate + H2O = a ribonucleoside 5'-diphosphate + phosphate + H(+). The catalysed reaction is RNA(n) + a ribonucleoside 5'-triphosphate = RNA(n+1) + diphosphate. The enzyme catalyses Endopeptidase with a preference for cleavage when the P1 position is occupied by Glu-|-Xaa and the P1' position is occupied by Gly-|-Yaa.. Functionally, together with NTPase and NS4, initiates the formation of the replication complex. Induces the proliferation of the host smooth ER membranes forming long tubular structures. These remodeled membranes probably form the viral factories that contain the replication complex. In terms of biological role, displays NTPase activity, but no helicase activity. Induces the formation of convoluted membranes derived from the host ER. These remodeled membranes probably form the viral factories that contain the replication complex. Together with NS2 and NS4, initiates the formation of the replication complex. Probable key protein responsible for the formation of membrane alterations by the virus. Induces the formation of convoluted membranes derived from the host ER. These remodeled membranes probably form the viral factories that contain the replication complex. Together with NS2 and NTPase, initiates the formation of the replication complex. Its function is as follows. Viral genome-linked protein is covalently linked to the 5'-end of the positive-strand, negative-strand genomic RNAs and subgenomic RNA. Acts as a genome-linked replication primer. May recruit ribosome to viral RNA thereby promoting viral proteins translation. Interacts with host translation initiation complex to allow the translation of viral proteins. Functionally, protease-polymerase p76 processes the polyprotein: Pro-Pol is first released by autocleavage, then all other proteins are cleaved. Cleaves host translation initiation factor eIF4G1, eIF4G2 and PABP1 thereby inducing a shutdown of host protein synthesis. This shutdown may not prevent viral mRNA from being translated since viral Vpg replaces the cap. It is also an RNA-directed RNA polymerase which replicates genomic and antigenomic viral RNA by recognizing specific signals. Also transcribes a subgenomic mRNA by initiating RNA synthesis internally on antigenomic RNA. This sgRNA codes for structural proteins. Catalyzes the covalent attachment VPg with viral RNAs. In terms of biological role, capsid protein self assembles to form an icosahedral capsid with a T=3 symmetry, about 38 nm in diameter, and consisting of 180 capsid proteins. The capsid encapsulate the genomic RNA and VP2 proteins. Attaches virion to target cells, inducing endocytosis of the viral particle. Acidification of the endosome induces conformational change of capsid protein thereby injecting virus genomic RNA into host cytoplasm. The protein is Genome polyprotein of Homo sapiens (Human).